Reading from the N-terminus, the 538-residue chain is Sterile alpha motif domain-containing protein 1 (538 aa).

A compositionally biased stretch (pro residues) spans 1–11 (MAGPPALPPPE). Disordered regions lie at residues 1 to 30 (MAGP…ASPH) and 92 to 247 (SYRN…GAAR). The span at 12–29 (TAAAATTAAAASSSAASP) shows a compositional bias: low complexity. The SAMD1-like winged helix (WH) domain maps to 23-99 (SSSAASPHYQ…SISYRNAARV (77 aa)). Position 107 is a phosphothreonine (Thr-107). The segment covering 115–125 (PRGAPAAAAAA) has biased composition (low complexity). Residues 126-139 (APPPTPAPPPPPAP) show a composition bias toward pro residues. The span at 140–158 (VAAAAPARAPRAAAAAATA) shows a compositional bias: low complexity. Ser-161 bears the Phosphoserine mark. Over residues 168–177 (GPRAQRAAPL) the composition is skewed to low complexity. Pro residues predominate over residues 178–236 (AAPPPAPAAPPAVAPPAGPRRAPPPAVAAREPPLPPPPQPPAPPQQQQPPPPQPQPPPE). The span at 237-247 (GGAVRAGGAAR) shows a compositional bias: low complexity. Ser-261 carries the phosphoserine modification. The span at 282–291 (AARGRLERTR) shows a compositional bias: basic and acidic residues. The segment at 282–458 (AARGRLERTR…PPGRKEKPSD (177 aa)) is disordered. Acidic residues predominate over residues 328 to 351 (KEEEEDDDEDEDEEDDVSEGSEVP). Over residues 425 to 436 (SPSPVPLPPGKP) the composition is skewed to pro residues. One can recognise an SAM domain in the interval 462-530 (WTVMDVVEYF…KVLQQGHFED (69 aa)).

As to quaternary structure, homopolymerize into a closed pentameric ring. Interacts (via SAM domain) with L3MBTL3 (via SAM domain); the interaction mediates L3MBTL3 binding to chromatin. Interacts (via WH domain) with KDM1A; the interaction modulates KDM1A function. In terms of tissue distribution, expressed in atherosclerotic lesions, not in normal intima. Expressed in foam cells.

It is found in the nucleus. The protein localises to the chromosome. The protein resides in the secreted. Unmethylated CpG islands (CGIs)-binding protein which localizes to H3K4me3-decorated CGIs, where it acts as a transcriptional repressor. Tethers L3MBTL3 to chromatin and interacts with the KDM1A histone demethylase complex to modulate H3K4me2 and H3K4me3 levels at CGIs. Plays a role in atherogenesis by binding with LDL on cell surface and promoting LDL oxidation which leads to the formation of foam cell. The sequence is that of Sterile alpha motif domain-containing protein 1 from Homo sapiens (Human).